Consider the following 300-residue polypeptide: GTPase Era (300 aa).

The Era-type G domain occupies 4–173; the sequence is KYGIVAIVGK…INTIKQYLHK (170 aa). Residues 12-19 are G1; it reads GKPNVGKS. A GTP-binding site is contributed by 12-19; that stretch reads GKPNVGKS. The tract at residues 38-42 is G2; the sequence is QTTRN. Positions 59–62 are G3; sequence DTPG. Residues 59 to 63 and 122 to 125 contribute to the GTP site; these read DTPGF and SKAE. Residues 122 to 125 are G4; it reads SKAE. The tract at residues 152–154 is G5; the sequence is ISA. The KH type-2 domain maps to 204–282; that stretch reads LNHEVPHGVG…SLTIFVKVEN (79 aa).

This sequence belongs to the TRAFAC class TrmE-Era-EngA-EngB-Septin-like GTPase superfamily. Era GTPase family. As to quaternary structure, monomer.

The protein localises to the cytoplasm. It localises to the cell membrane. Functionally, an essential GTPase that binds both GDP and GTP, with rapid nucleotide exchange. Plays a role in 16S rRNA processing and 30S ribosomal subunit biogenesis and possibly also in cell cycle regulation and energy metabolism. This chain is GTPase Era, found in Ureaplasma urealyticum serovar 10 (strain ATCC 33699 / Western).